The sequence spans 498 residues: Lycopene beta cyclase, chloroplastic/chromoplastic (498 aa).

A chloroplast and chromoplast-targeting transit peptide spans 1–79; that stretch reads MDTLLRTPNN…ELPMYDPSKG (79 aa). 84 to 112 contacts NAD(+); it reads LAVVGGGPAGLAVAQQVSEAGLSVCSIDP. The FLEET motif signature appears at 293-297; sequence FLEET.

This sequence belongs to the lycopene cyclase family. Monomer. Requires FAD as cofactor. The cofactor is NADPH.

The protein localises to the plastid. The protein resides in the chloroplast. Its subcellular location is the chromoplast. The enzyme catalyses a carotenoid psi-end group = a carotenoid beta-end derivative. It carries out the reaction all-trans-lycopene = gamma-carotene. It catalyses the reaction gamma-carotene = all-trans-beta-carotene. The catalysed reaction is all-trans-neurosporene = beta-zeacarotene. The enzyme catalyses beta-zeacarotene = 7,8-dihydro-beta-carotene. Its pathway is carotenoid biosynthesis; beta-carotene biosynthesis. It participates in carotenoid biosynthesis; beta-zeacarotene biosynthesis. Catalyzes the double cyclization reaction which converts lycopene to beta-carotene. Catalyzes the double cyclization reaction which converts neurosporene to 7,8-dihydro-beta-carotene. The sequence is that of Lycopene beta cyclase, chloroplastic/chromoplastic from Capsicum annuum (Capsicum pepper).